The following is a 283-amino-acid chain: Formamidopyrimidine-DNA glycosylase (283 aa).

The Schiff-base intermediate with DNA role is filled by P2. E3 serves as the catalytic Proton donor. K58 (proton donor; for beta-elimination activity) is an active-site residue. Positions 100, 119, and 162 each coordinate DNA. Residues 247–283 (DVYGREGAPCKGEGCTGQIKRIVQSGRSSFYCAQCQR) form an FPG-type zinc finger. R273 serves as the catalytic Proton donor; for delta-elimination activity.

Belongs to the FPG family. As to quaternary structure, monomer. Zn(2+) serves as cofactor.

It carries out the reaction Hydrolysis of DNA containing ring-opened 7-methylguanine residues, releasing 2,6-diamino-4-hydroxy-5-(N-methyl)formamidopyrimidine.. The enzyme catalyses 2'-deoxyribonucleotide-(2'-deoxyribose 5'-phosphate)-2'-deoxyribonucleotide-DNA = a 3'-end 2'-deoxyribonucleotide-(2,3-dehydro-2,3-deoxyribose 5'-phosphate)-DNA + a 5'-end 5'-phospho-2'-deoxyribonucleoside-DNA + H(+). Functionally, involved in base excision repair of DNA damaged by oxidation or by mutagenic agents. Acts as a DNA glycosylase that recognizes and removes damaged bases. Has a preference for oxidized purines, such as 7,8-dihydro-8-oxoguanine (8-oxoG). Has AP (apurinic/apyrimidinic) lyase activity and introduces nicks in the DNA strand. Cleaves the DNA backbone by beta-delta elimination to generate a single-strand break at the site of the removed base with both 3'- and 5'-phosphates. This Roseobacter denitrificans (strain ATCC 33942 / OCh 114) (Erythrobacter sp. (strain OCh 114)) protein is Formamidopyrimidine-DNA glycosylase.